A 286-amino-acid polypeptide reads, in one-letter code: Gap junction alpha-6 protein (286 aa).

The Cytoplasmic segment spans residues 1–23 (MSDWSALHQLLEKVQPYSTAGGK). The helical transmembrane segment at 24–41 (VWIKVLFIFRILLLGTAI) threads the bilayer. Residues 42 to 76 (ESAWSDEQFEFHCNTQQPGCENVCYDQAFPISHVR) are Extracellular-facing. The helical transmembrane segment at 77–99 (LWVLQVIFVSVPTLLHLAHVYYV) threads the bilayer. Residues 100-151 (IRQNEKLKKQEEEELKVAHFNGASGERRLQKHTGKHIKCGSKEHGNRKMRGR) lie on the Cytoplasmic side of the membrane. Residues 152–174 (LLLTYMASIFFKSVFEVAFLLIQ) traverse the membrane as a helical segment. Residues 175–209 (WYLYGFTLSAVYICEQSPCPHRVDCFLSRPTEKTI) lie on the Extracellular side of the membrane. A helical transmembrane segment spans residues 210 to 232 (FILFMLVVSMVSFVLNVIELFYV). The Cytoplasmic portion of the chain corresponds to 233 to 286 (LFKAIKNHLGNEKEEVYCNPVELQKPSCVSSSAVLTTICSSDQVVPVGLSSFYM).

The protein belongs to the connexin family. Alpha-type (group II) subfamily. As to quaternary structure, a connexon is composed of a hexamer of connexins. Expressed in testis.

It is found in the cell membrane. The protein resides in the cell junction. Its subcellular location is the gap junction. Functionally, one gap junction consists of a cluster of closely packed pairs of transmembrane channels, the connexons, through which materials of low MW diffuse from one cell to a neighboring cell. In Rattus norvegicus (Rat), this protein is Gap junction alpha-6 protein (Gja6).